The sequence spans 364 residues: Lysophosphatidic acid receptor 1 (364 aa).

Over 1-50 (MAAISTSIPVISQPQFTAMNEPQCFYNESIAFFYNRSGKHLATEWNTVSK) the chain is Extracellular. Disulfide bonds link C24/C190 and C188/C195. N27 and N35 each carry an N-linked (GlcNAc...) asparagine glycan. K39 serves as a coordination point for a 1-acyl-sn-glycero-3-phosphate. The chain crosses the membrane as a helical span at residues 51–75 (LVMGLGITVCIFIMLANLLVMVAIY). Residues 76 to 83 (VNRRFHFP) are Cytoplasmic-facing. Residues 84–107 (IYYLMANLAAADFFAGLAYFYLMF) traverse the membrane as a helical segment. At 108-121 (NTGPNTRRLTVSTW) the chain is on the extracellular side. The chain crosses the membrane as a helical span at residues 122-144 (LLRQGLIDTSLTASVANLLAIAI). 124–129 (RQGLID) contacts a 1-acyl-sn-glycero-3-phosphate. Residues 145 to 163 (ERHITVFRMQLHTRMSNRR) are Cytoplasmic-facing. A helical transmembrane segment spans residues 164 to 184 (VVVVIVVIWTMAIVMGAIPSV). The Extracellular portion of the chain corresponds to 185-204 (GWNCICDIENCSNMAPLYSD). The chain crosses the membrane as a helical span at residues 205 to 225 (SYLVFWAIFNLVTFVVMVVLY). A 1-acyl-sn-glycero-3-phosphate is bound at residue W210. Over 226-255 (AHIFGYVRQRTMRMSRHSSGPRRNRDTMMS) the chain is Cytoplasmic. The chain crosses the membrane as a helical span at residues 256 to 280 (LLKTVVIVLGAFIICWTPGLVLLLL). Residues 281-294 (DVCCPQCDVLAYEK) are Extracellular-facing. A disulfide bridge connects residues C284 and C287. The helical transmembrane segment at 295–315 (FFLLLAEFNSAMNPIIYSYRD) threads the bilayer. Residues 316 to 364 (KEMSATFRQILCCQRSENPTGPTEGSDRSASSLNHTILAGVHSNDHSVV) are Cytoplasmic-facing. Residue S341 is modified to Phosphoserine. T351 carries the phosphothreonine modification.

Belongs to the G-protein coupled receptor 1 family. As to quaternary structure, interacts with RALA and GRK2. Interacts with GNAQ and GNA13. Interacts with CD14; the interaction is enhanced by exposure to bacterial lipopolysaccharide (LPS). Post-translationally, N-glycosylated. Expressed in many adult organs, including brain, heart, colon, small intestine, placenta, prostate, ovary, pancreas, testes, spleen, skeletal muscle, and kidney. Little or no expression in liver, lung, thymus, or peripheral blood leukocytes. Detected in lung fibroblasts from bronchoalveolar fluid from patients with idiopathic pulmonary fibrosis. Detected in bone marrow-derived mesenchymal stem cells.

The protein localises to the cell surface. It is found in the cell membrane. Its subcellular location is the endosome. Functionally, receptor for lysophosphatidic acid (LPA). Plays a role in the reorganization of the actin cytoskeleton, cell migration, differentiation and proliferation, and thereby contributes to the responses to tissue damage and infectious agents. Activates downstream signaling cascades via the G(i)/G(o), G(12)/G(13), and G(q) families of heteromeric G proteins. Signaling inhibits adenylyl cyclase activity and decreases cellular cAMP levels. Signaling triggers an increase of cytoplasmic Ca(2+) levels. Activates RALA; this leads to the activation of phospholipase C (PLC) and the formation of inositol 1,4,5-trisphosphate. Signaling mediates activation of down-stream MAP kinases. Contributes to the regulation of cell shape. Promotes Rho-dependent reorganization of the actin cytoskeleton in neuronal cells and neurite retraction. Promotes the activation of Rho and the formation of actin stress fibers. Promotes formation of lamellipodia at the leading edge of migrating cells via activation of RAC1. Through its function as LPA receptor, plays a role in chemotaxis and cell migration, including responses to injury and wounding. Plays a role in triggering inflammation in response to bacterial lipopolysaccharide (LPS) via its interaction with CD14. Promotes cell proliferation in response to LPA. Inhibits the intracellular ciliogenesis pathway in response to LPA and through AKT1 activation. Required for normal skeleton development. May play a role in osteoblast differentiation. Required for normal brain development. Required for normal proliferation, survival and maturation of newly formed neurons in the adult dentate gyrus. Plays a role in pain perception and in the initiation of neuropathic pain. The chain is Lysophosphatidic acid receptor 1 (LPAR1) from Homo sapiens (Human).